The chain runs to 248 residues: Probable transcriptional regulatory protein FTF0655 (248 aa).

Belongs to the TACO1 family.

It localises to the cytoplasm. This Francisella tularensis subsp. tularensis (strain FSC 198) protein is Probable transcriptional regulatory protein FTF0655.